Consider the following 40-residue polypeptide: MLNLLVITLPILAAIGWVTLNIQKPAREQWDRQFGDNKPF.

The chain crosses the membrane as a helical span at residues 4–22 (LLVITLPILAAIGWVTLNI).

The protein belongs to the PsbY family. As to quaternary structure, PSII is composed of 1 copy each of membrane proteins PsbA, PsbB, PsbC, PsbD, PsbE, PsbF, PsbH, PsbI, PsbJ, PsbK, PsbL, PsbM, PsbT, PsbX, PsbY, Psb30/Ycf12, peripheral proteins PsbO, CyanoQ (PsbQ), PsbU, PsbV and a large number of cofactors. It forms dimeric complexes.

Its subcellular location is the cellular thylakoid membrane. In terms of biological role, loosely associated component of the core of photosystem II (PSII), it is not always seen in crystals. PSII is a light-driven water plastoquinone oxidoreductase, using light energy to abstract electrons from H(2)O, generating a proton gradient subsequently used for ATP formation. In Prochlorococcus marinus (strain SARG / CCMP1375 / SS120), this protein is Photosystem II reaction center protein Y.